The chain runs to 83 residues: Small ribosomal subunit protein bS16 (83 aa).

Belongs to the bacterial ribosomal protein bS16 family.

This is Small ribosomal subunit protein bS16 from Borrelia duttonii (strain Ly).